The chain runs to 253 residues: 3-deoxy-manno-octulosonate cytidylyltransferase (253 aa).

Belongs to the KdsB family.

The protein localises to the cytoplasm. The enzyme catalyses 3-deoxy-alpha-D-manno-oct-2-ulosonate + CTP = CMP-3-deoxy-beta-D-manno-octulosonate + diphosphate. The protein operates within nucleotide-sugar biosynthesis; CMP-3-deoxy-D-manno-octulosonate biosynthesis; CMP-3-deoxy-D-manno-octulosonate from 3-deoxy-D-manno-octulosonate and CTP: step 1/1. Its pathway is bacterial outer membrane biogenesis; lipopolysaccharide biosynthesis. Activates KDO (a required 8-carbon sugar) for incorporation into bacterial lipopolysaccharide in Gram-negative bacteria. The polypeptide is 3-deoxy-manno-octulosonate cytidylyltransferase (Acinetobacter baumannii (strain AYE)).